We begin with the raw amino-acid sequence, 233 residues long: MSRSDVFADAPPADWAQAVPLLREGAHLPLLRSVARLRRSKTVYPPEGQVFAALHCTPLHTVRVVIVGQDPYHGAGQAHGLAFSVPQGVKPPPSLRNVLKEAAAQKPEAPAAAGMQHNGVQTDLTPWAEQGVLLLNTALTVEAGRAGSHAALGWHAVTDDIIRTVSERCPAVVFMLWGNHARQKAALVDTGRHLLLESVHPSPFSAHKGFLGCGHFVTANSWLAARGLLPVLW.

The active-site Proton acceptor is aspartate 70.

It belongs to the uracil-DNA glycosylase (UDG) superfamily. UNG family.

It is found in the cytoplasm. It carries out the reaction Hydrolyzes single-stranded DNA or mismatched double-stranded DNA and polynucleotides, releasing free uracil.. In terms of biological role, excises uracil residues from the DNA which can arise as a result of misincorporation of dUMP residues by DNA polymerase or due to deamination of cytosine. The sequence is that of Uracil-DNA glycosylase from Oleidesulfovibrio alaskensis (strain ATCC BAA-1058 / DSM 17464 / G20) (Desulfovibrio alaskensis).